We begin with the raw amino-acid sequence, 1741 residues long: Meiosis regulator and mRNA stability factor 1 (1741 aa).

The NYN domain occupies 345-482; sequence IGVFWDIENC…ALLHHAHELV (138 aa). 3 disordered regions span residues 594-636, 659-678, and 683-716; these read KVKS…GSVI, TENH…SHAA, and LTTK…PVDK. Positions 659–668 are enriched in basic and acidic residues; that stretch reads TENHQEHLRE. The RRM domain maps to 788–867; it reads ADIQISNIDY…KRIQVSLATG (80 aa). HTH OST-type domains lie at 872–946, 1000–1076, 1097–1171, 1173–1248, 1257–1332, 1333–1408, 1409–1483, and 1484–1558; these read SLSL…SPLG, SLKT…HNKP, QLIQ…LTHR, QVKR…IPKR, RTKQ…TEVE, QVKA…INRK, SLRT…VRLT, and NLYM…LKND. The segment covering 1684-1700 has biased composition (polar residues); that stretch reads KLTSGSVASSTAENTSV. Residues 1684–1727 are disordered; it reads KLTSGSVASSTAENTSVPPRHSSETQLNKEAMDSPAKKQHKNKV.

The protein localises to the peroxisome. Functionally, essential regulator of oogenesis required for female meiotic progression to repress transposable elements and preventing their mobilization, which is essential for the germline integrity. The sequence is that of Meiosis regulator and mRNA stability factor 1 from Gallus gallus (Chicken).